Here is a 416-residue protein sequence, read N- to C-terminus: Serine hydroxymethyltransferase 1 (416 aa).

Residues Leu121 and 125–127 (GHL) contribute to the (6S)-5,6,7,8-tetrahydrofolate site. An N6-(pyridoxal phosphate)lysine modification is found at Lys229. (6S)-5,6,7,8-tetrahydrofolate contacts are provided by residues Glu245 and 354-356 (SPF).

This sequence belongs to the SHMT family. Homodimer. Pyridoxal 5'-phosphate is required as a cofactor.

Its subcellular location is the cytoplasm. The catalysed reaction is (6R)-5,10-methylene-5,6,7,8-tetrahydrofolate + glycine + H2O = (6S)-5,6,7,8-tetrahydrofolate + L-serine. It participates in one-carbon metabolism; tetrahydrofolate interconversion. Its pathway is amino-acid biosynthesis; glycine biosynthesis; glycine from L-serine: step 1/1. Catalyzes the reversible interconversion of serine and glycine with tetrahydrofolate (THF) serving as the one-carbon carrier. This reaction serves as the major source of one-carbon groups required for the biosynthesis of purines, thymidylate, methionine, and other important biomolecules. Also exhibits THF-independent aldolase activity toward beta-hydroxyamino acids, producing glycine and aldehydes, via a retro-aldol mechanism. The polypeptide is Serine hydroxymethyltransferase 1 (Vibrio parahaemolyticus serotype O3:K6 (strain RIMD 2210633)).